The following is a 247-amino-acid chain: 4-nitrobenzoate reductase (247 aa).

29–33 (RRSVR) lines the FMN pocket. 4 residues coordinate NADP(+): serine 59, arginine 112, tyrosine 120, and leucine 126. Arginine 232 is an FMN binding site.

Belongs to the nitroreductase family. It depends on FMN as a cofactor.

The catalysed reaction is 4-nitrobenzoate + 2 NADPH + 2 H(+) = 4-hydroxylaminobenzoate + 2 NADP(+) + H2O. In terms of biological role, nitroreductase involved in the degradation of nitroaromatic compounds. Catalyzes the conversion of 4-nitrobenzoate to 4-hydroxylaminobenzoate. This Nocardioides sp. (strain LMS-CY) protein is 4-nitrobenzoate reductase.